The sequence spans 243 residues: UPF0246 protein M28_Spy1772 (243 aa).

The protein belongs to the UPF0246 family.

The protein is UPF0246 protein M28_Spy1772 of Streptococcus pyogenes serotype M28 (strain MGAS6180).